The sequence spans 226 residues: Thiopurine S-methyltransferase (226 aa).

Residues Trp16, Met51, Glu72, and Arg131 each contribute to the S-adenosyl-L-methionine site.

Belongs to the class I-like SAM-binding methyltransferase superfamily. TPMT family.

The protein localises to the cytoplasm. It carries out the reaction S-adenosyl-L-methionine + a thiopurine = S-adenosyl-L-homocysteine + a thiopurine S-methylether.. This chain is Thiopurine S-methyltransferase, found in Francisella tularensis subsp. tularensis (strain SCHU S4 / Schu 4).